A 193-amino-acid chain; its full sequence is Phosphoheptose isomerase (193 aa).

In terms of domain architecture, SIS spans 37–193; that stretch reads LANAFKAGGK…QLIEKEMADQ (157 aa). 52-54 contributes to the substrate binding site; sequence NGG. 2 residues coordinate Zn(2+): His-61 and Glu-65. Residues Glu-65, 93–94, 119–121, Ser-124, and Gln-172 contribute to the substrate site; these read ND and STS. 2 residues coordinate Zn(2+): Gln-172 and His-180.

It belongs to the SIS family. GmhA subfamily. Homotetramer. It depends on Zn(2+) as a cofactor.

Its subcellular location is the cytoplasm. It carries out the reaction 2 D-sedoheptulose 7-phosphate = D-glycero-alpha-D-manno-heptose 7-phosphate + D-glycero-beta-D-manno-heptose 7-phosphate. The protein operates within carbohydrate biosynthesis; D-glycero-D-manno-heptose 7-phosphate biosynthesis; D-glycero-alpha-D-manno-heptose 7-phosphate and D-glycero-beta-D-manno-heptose 7-phosphate from sedoheptulose 7-phosphate: step 1/1. Catalyzes the isomerization of sedoheptulose 7-phosphate in D-glycero-D-manno-heptose 7-phosphate. The polypeptide is Phosphoheptose isomerase (Pectobacterium atrosepticum (strain SCRI 1043 / ATCC BAA-672) (Erwinia carotovora subsp. atroseptica)).